We begin with the raw amino-acid sequence, 268 residues long: Nickel import ATP-binding protein NikE (268 aa).

Residues L4 to N252 form the ABC transporter domain. An ATP-binding site is contributed by G45 to S52.

Belongs to the ABC transporter superfamily. Nickel importer (TC 3.A.1.5.3) family. As to quaternary structure, the complex is composed of two ATP-binding proteins (NikD and NikE), two transmembrane proteins (NikB and NikC) and a solute-binding protein (NikA).

The protein resides in the cell inner membrane. It carries out the reaction Ni(2+)(out) + ATP + H2O = Ni(2+)(in) + ADP + phosphate + H(+). In terms of biological role, part of the ABC transporter complex NikABCDE involved in nickel import. Responsible for energy coupling to the transport system. In Escherichia coli O157:H7, this protein is Nickel import ATP-binding protein NikE.